The primary structure comprises 266 residues: MEFFKYIFYGIIQGLTEFIPISSTAHLKIISLLFGMDDPGSSVSAIIQIGSVFAIFWYFRKSISNYKNTNSRKPSYSFLFNKLNKSIFIGTIPIVFIGVIIKLFVPGFSDSFLRSNLSIALVSILMSLIMLFADISTKKSINLNNHKYPNNLYIGIAQAFAIVPGVSRSGATISMALLSGWNRKDAAKFSFLLGIPSISLAAFVEFFSAVNQFSTFPFLPLFAGLITAFFSSLLAINFLIKYVSSHGLKIFVYYRLIFGILILFNL.

The next 8 membrane-spanning stretches (helical) occupy residues 1–21 (MEFF…FIPI), 39–59 (PGSS…FWYF), 87–107 (IFIG…FVPG), 117–137 (LSIA…DIST), 153–173 (YIGI…GATI), 189–209 (FSFL…FFSA), 216–236 (FPFL…LLAI), and 246–266 (HGLK…LFNL).

It belongs to the UppP family.

Its subcellular location is the cell inner membrane. The catalysed reaction is di-trans,octa-cis-undecaprenyl diphosphate + H2O = di-trans,octa-cis-undecaprenyl phosphate + phosphate + H(+). Catalyzes the dephosphorylation of undecaprenyl diphosphate (UPP). Confers resistance to bacitracin. The sequence is that of Undecaprenyl-diphosphatase from Prochlorococcus marinus subsp. pastoris (strain CCMP1986 / NIES-2087 / MED4).